We begin with the raw amino-acid sequence, 361 residues long: Chorismate synthase (361 aa).

NADP(+)-binding residues include R48 and R54. FMN-binding positions include 131–133, 243–244, G287, 302–306, and R328; these read RSS, NA, and KPTSS.

It belongs to the chorismate synthase family. Homotetramer. FMNH2 serves as cofactor.

It carries out the reaction 5-O-(1-carboxyvinyl)-3-phosphoshikimate = chorismate + phosphate. It functions in the pathway metabolic intermediate biosynthesis; chorismate biosynthesis; chorismate from D-erythrose 4-phosphate and phosphoenolpyruvate: step 7/7. Catalyzes the anti-1,4-elimination of the C-3 phosphate and the C-6 proR hydrogen from 5-enolpyruvylshikimate-3-phosphate (EPSP) to yield chorismate, which is the branch point compound that serves as the starting substrate for the three terminal pathways of aromatic amino acid biosynthesis. This reaction introduces a second double bond into the aromatic ring system. This is Chorismate synthase from Rhodopseudomonas palustris (strain HaA2).